The following is a 377-amino-acid chain: Guanine nucleotide-binding protein subunit beta-1 (377 aa).

7 WD repeats span residues 63–93 (GHTG…IVWN), 105–135 (LPCA…SIFN), 154–185 (GHKG…VLWD), 202–233 (GHTA…RLWD), 246–276 (GHEG…RLFD), 293–323 (GDIP…YVWD), and 339–369 (SHEG…KIWA).

The protein belongs to the WD repeat G protein beta family. As to quaternary structure, g proteins are composed of 3 units, alpha, beta and gamma.

Guanine nucleotide-binding proteins (G proteins) are involved as a modulator or transducer in various transmembrane signaling systems. The beta and gamma chains are required for the GTPase activity, for replacement of GDP by GTP, and for G protein-effector interaction. The protein is Guanine nucleotide-binding protein subunit beta-1 of Nicotiana tabacum (Common tobacco).